A 257-amino-acid polypeptide reads, in one-letter code: Transmembrane protein C257L (257 aa).

2 helical membrane-spanning segments follow: residues 123 to 143 (LELL…FTAL) and 163 to 183 (MMIF…YVLV).

Belongs to the asfivirus C257R family.

The protein resides in the host membrane. It localises to the virion. This is Transmembrane protein C257L from African swine fever virus (isolate Tick/South Africa/Pretoriuskop Pr4/1996) (ASFV).